Consider the following 338-residue polypeptide: L-serine dehydratase (338 aa).

Lysine 39 carries the post-translational modification N6-(pyridoxal phosphate)lysine.

It belongs to the serine/threonine dehydratase family. Pyridoxal 5'-phosphate serves as cofactor.

It is found in the cytoplasm. It carries out the reaction L-serine = pyruvate + NH4(+). The protein operates within carbohydrate biosynthesis; gluconeogenesis. In Saccharomyces cerevisiae (strain AWRI1631) (Baker's yeast), this protein is L-serine dehydratase (SDL1).